We begin with the raw amino-acid sequence, 303 residues long: Recombination-associated protein RdgC (303 aa).

This sequence belongs to the RdgC family.

It localises to the cytoplasm. It is found in the nucleoid. In terms of biological role, may be involved in recombination. In Edwardsiella ictaluri (strain 93-146), this protein is Recombination-associated protein RdgC.